The following is a 212-amino-acid chain: Large ribosomal subunit protein uL3 (212 aa).

The residue at position 153 (glutamine 153) is an N5-methylglutamine.

It belongs to the universal ribosomal protein uL3 family. As to quaternary structure, part of the 50S ribosomal subunit. Forms a cluster with proteins L14 and L19. Post-translationally, methylated by PrmB.

Functionally, one of the primary rRNA binding proteins, it binds directly near the 3'-end of the 23S rRNA, where it nucleates assembly of the 50S subunit. The protein is Large ribosomal subunit protein uL3 of Shewanella frigidimarina (strain NCIMB 400).